The primary structure comprises 142 residues: Hemoglobin subunit beta-1 (142 aa).

The Globin domain occupies 2 to 142 (SLTDEEIRLI…VTEALSCQYH (141 aa)). Histidine 59 and histidine 88 together coordinate heme b.

Belongs to the globin family. In terms of assembly, heterotetramer of two alpha chains and two beta chains. In terms of tissue distribution, red blood cells.

In terms of biological role, involved in oxygen transport from the lung to the various peripheral tissues. The sequence is that of Hemoglobin subunit beta-1 (HBB1) from Torpedo marmorata (Marbled electric ray).